A 140-amino-acid polypeptide reads, in one-letter code: 3-hydroxyacyl-[acyl-carrier-protein] dehydratase FabZ (140 aa).

His48 is a catalytic residue.

Belongs to the thioester dehydratase family. FabZ subfamily.

It localises to the cytoplasm. It catalyses the reaction a (3R)-hydroxyacyl-[ACP] = a (2E)-enoyl-[ACP] + H2O. Functionally, involved in unsaturated fatty acids biosynthesis. Catalyzes the dehydration of short chain beta-hydroxyacyl-ACPs and long chain saturated and unsaturated beta-hydroxyacyl-ACPs. The protein is 3-hydroxyacyl-[acyl-carrier-protein] dehydratase FabZ of Oceanobacillus iheyensis (strain DSM 14371 / CIP 107618 / JCM 11309 / KCTC 3954 / HTE831).